The following is a 610-amino-acid chain: Glutamine--fructose-6-phosphate aminotransferase [isomerizing] (610 aa).

Catalysis depends on Cys-2, which acts as the Nucleophile; for GATase activity. The Glutamine amidotransferase type-2 domain occupies 2-218; that stretch reads CGIVGAVAQR…EGDVAEITRR (217 aa). 2 SIS domains span residues 286 to 426 and 459 to 600; these read AAEI…QQGR and LATD…VDQP. Lys-605 functions as the For Fru-6P isomerization activity in the catalytic mechanism.

Homodimer.

It localises to the cytoplasm. It catalyses the reaction D-fructose 6-phosphate + L-glutamine = D-glucosamine 6-phosphate + L-glutamate. Its function is as follows. Catalyzes the first step in hexosamine metabolism, converting fructose-6P into glucosamine-6P using glutamine as a nitrogen source. This is Glutamine--fructose-6-phosphate aminotransferase [isomerizing] from Vibrio vulnificus (strain YJ016).